We begin with the raw amino-acid sequence, 342 residues long: Ferrochelatase (342 aa).

Residues H188 and E268 each contribute to the Fe cation site.

The protein belongs to the ferrochelatase family.

The protein resides in the cytoplasm. The catalysed reaction is heme b + 2 H(+) = protoporphyrin IX + Fe(2+). It participates in porphyrin-containing compound metabolism; protoheme biosynthesis; protoheme from protoporphyrin-IX: step 1/1. Catalyzes the ferrous insertion into protoporphyrin IX. The polypeptide is Ferrochelatase (Rickettsia typhi (strain ATCC VR-144 / Wilmington)).